The following is a 520-amino-acid chain: Probable protein phosphatase 2C 39 (520 aa).

Residues 160 to 507 (FLTSTEIKMA…DDVTIIVIIL (348 aa)) form the PPM-type phosphatase domain. Residues D195, G196, D435, and D498 each coordinate Mn(2+).

The protein belongs to the PP2C family. Mg(2+) is required as a cofactor. The cofactor is Mn(2+).

It carries out the reaction O-phospho-L-seryl-[protein] + H2O = L-seryl-[protein] + phosphate. The enzyme catalyses O-phospho-L-threonyl-[protein] + H2O = L-threonyl-[protein] + phosphate. This is Probable protein phosphatase 2C 39 from Oryza sativa subsp. japonica (Rice).